The following is a 426-amino-acid chain: Phosphomethylpyrimidine synthase (426 aa).

Substrate contacts are provided by residues asparagine 65, methionine 94, tyrosine 123, histidine 162, 184–186 (SRG), 225–228 (DGMR), and glutamate 264. Position 268 (histidine 268) interacts with Zn(2+). Position 291 (tyrosine 291) interacts with substrate. Residue histidine 332 coordinates Zn(2+). [4Fe-4S] cluster-binding residues include cysteine 408, cysteine 411, and cysteine 415.

This sequence belongs to the ThiC family. The cofactor is [4Fe-4S] cluster.

It carries out the reaction 5-amino-1-(5-phospho-beta-D-ribosyl)imidazole + S-adenosyl-L-methionine = 4-amino-2-methyl-5-(phosphooxymethyl)pyrimidine + CO + 5'-deoxyadenosine + formate + L-methionine + 3 H(+). It functions in the pathway cofactor biosynthesis; thiamine diphosphate biosynthesis. Catalyzes the synthesis of the hydroxymethylpyrimidine phosphate (HMP-P) moiety of thiamine from aminoimidazole ribotide (AIR) in a radical S-adenosyl-L-methionine (SAM)-dependent reaction. The chain is Phosphomethylpyrimidine synthase from Methanococcus maripaludis (strain DSM 14266 / JCM 13030 / NBRC 101832 / S2 / LL).